Consider the following 609-residue polypeptide: Acetyl-coenzyme A carboxylase carboxyl transferase subunits beta/alpha (609 aa).

Residues 1–271 (MTLEATAIEA…QTAEFLLTHG (271 aa)) are acetyl-coenzyme A carboxylase carboxyl transferase subunit beta. A CoA carboxyltransferase N-terminal domain is found at 39 to 308 (SWLLCGGCGT…GIPRQAGRPD (270 aa)). A carboxyltransferase region spans residues 39–559 (SWLLCGGCGT…REALRGALAD (521 aa)). Zn(2+)-binding residues include cysteine 43, cysteine 46, cysteine 62, and cysteine 65. The segment at 43–65 (CGGCGTMLYERRFAREGRVCADC) adopts a C4-type zinc-finger fold. The acetyl-coenzyme A carboxylase carboxyl transferase subunit alpha stretch occupies residues 272–582 (VVDLISPRRE…RARFRQFGVA (311 aa)). A CoA carboxyltransferase C-terminal domain is found at 314–559 (DPEQLARRDA…REALRGALAD (246 aa)). Residues 582–592 (ATPAPATAPAA) are compositionally biased toward low complexity. The tract at residues 582–609 (ATPAPATAPAASDDAHESQTDRSVEATR) is disordered. Basic and acidic residues predominate over residues 594–609 (DDAHESQTDRSVEATR).

In the N-terminal section; belongs to the AccD/PCCB family. This sequence in the C-terminal section; belongs to the AccA family. Acetyl-CoA carboxylase is a heterotetramer composed of biotin carboxyl carrier protein (AccB), biotin carboxylase (AccC) and two subunits of ACCase subunit beta/alpha. Zn(2+) serves as cofactor.

Its subcellular location is the cytoplasm. It carries out the reaction N(6)-carboxybiotinyl-L-lysyl-[protein] + acetyl-CoA = N(6)-biotinyl-L-lysyl-[protein] + malonyl-CoA. The protein operates within lipid metabolism; malonyl-CoA biosynthesis; malonyl-CoA from acetyl-CoA: step 1/1. Its function is as follows. Component of the acetyl coenzyme A carboxylase (ACC) complex. Biotin carboxylase (BC) catalyzes the carboxylation of biotin on its carrier protein (BCCP) and then the CO(2) group is transferred by the transcarboxylase to acetyl-CoA to form malonyl-CoA. The protein is Acetyl-coenzyme A carboxylase carboxyl transferase subunits beta/alpha (accD) of Frankia alni (strain DSM 45986 / CECT 9034 / ACN14a).